We begin with the raw amino-acid sequence, 592 residues long: Pyruvate decarboxylase 3 (592 aa).

Substrate contacts are provided by aspartate 54 and histidine 141. The segment at 419–501 is thiamine pyrophosphate binding; it reads DSWFNCQKLK…FLINNGGYTI (83 aa). Mg(2+) contacts are provided by aspartate 469, asparagine 496, and glycine 498. Glutamate 502 provides a ligand contact to substrate.

It belongs to the TPP enzyme family. Homotetramer. A metal cation serves as cofactor. Thiamine diphosphate is required as a cofactor. Expressed at low levels in roots and shoots.

The catalysed reaction is a 2-oxocarboxylate + H(+) = an aldehyde + CO2. The sequence is that of Pyruvate decarboxylase 3 (PDC3) from Arabidopsis thaliana (Mouse-ear cress).